The primary structure comprises 566 residues: 3'-5' exoribonuclease parn-1 (566 aa).

Residues Asp-29, Glu-31, Asp-283, and Asp-379 each coordinate a divalent metal cation.

The protein belongs to the CAF1 family. Requires a divalent metal cation as cofactor. In terms of tissue distribution, expressed in germline cells.

The protein localises to the cytoplasm. Functionally, involved in transcriptome surveillance. Required for piwi-interacting RNAs (piRNAs) 3'-end trimming, which is important for both fertility and piRNA-directed gene silencing. Has 3' to 5' exonuclease activity in vitro. The sequence is that of 3'-5' exoribonuclease parn-1 from Caenorhabditis elegans.